The primary structure comprises 352 residues: MTIAVGRVRQERGWFDIVDDWLKRDRFVFIGWSGLLLFPCAYLALGGWLTGTTFVTSWYTHGLASSYLEGCNFLTVAVSTPADSMGHSLLLLWGPEAQGDFTRWCQIGGLWTFVALHGALGLIGFMLRQFEIARLVGVRPYNAIAFSAPIAVFVSVFLIYPLGQSSWFFAPSFGVAGIFRFLLFFQGFHNWTLNPFHMMGVAGVLGGALLCAIHGATVENTLFQDGEAASTFRAFEPTQSEETYSMVTANRYWSQIFGIAFSNKRWLHFFMLFVPVTGLWMSSIGVVGLALNLRAYDFISQEVRAAEDPEFETFYTKNILLNEGIRAWMAPQDQPHERFEFPEEVLPRGNAL.

A helical membrane pass occupies residues 40–60; sequence CAYLALGGWLTGTTFVTSWYT. Histidine 117 contacts chlorophyll a. Residues 124 to 140 form a helical membrane-spanning segment; the sequence is GFMLRQFEIARLVGVRP. Positions 129 and 142 each coordinate pheophytin a. The chain crosses the membrane as a helical span at residues 152 to 165; it reads VFVSVFLIYPLGQS. Residue histidine 197 coordinates chlorophyll a. A helical membrane pass occupies residues 207-227; it reads GALLCAIHGATVENTLFQDGE. A plastoquinone is bound by residues histidine 214 and phenylalanine 261. Histidine 214 serves as a coordination point for Fe cation. A Fe cation-binding site is contributed by histidine 268. The helical transmembrane segment at 278 to 294 threads the bilayer; sequence GLWMSSIGVVGLALNLR.

Belongs to the reaction center PufL/M/PsbA/D family. PSII is composed of 1 copy each of membrane proteins PsbA, PsbB, PsbC, PsbD, PsbE, PsbF, PsbH, PsbI, PsbJ, PsbK, PsbL, PsbM, PsbT, PsbX, PsbY, PsbZ, Psb30/Ycf12, peripheral proteins PsbO, CyanoQ (PsbQ), PsbU, PsbV and a large number of cofactors. It forms dimeric complexes. The cofactor is The D1/D2 heterodimer binds P680, chlorophylls that are the primary electron donor of PSII, and subsequent electron acceptors. It shares a non-heme iron and each subunit binds pheophytin, quinone, additional chlorophylls, carotenoids and lipids. There is also a Cl(-1) ion associated with D1 and D2, which is required for oxygen evolution. The PSII complex binds additional chlorophylls, carotenoids and specific lipids..

The protein resides in the cellular thylakoid membrane. The catalysed reaction is 2 a plastoquinone + 4 hnu + 2 H2O = 2 a plastoquinol + O2. Functionally, photosystem II (PSII) is a light-driven water:plastoquinone oxidoreductase that uses light energy to abstract electrons from H(2)O, generating O(2) and a proton gradient subsequently used for ATP formation. It consists of a core antenna complex that captures photons, and an electron transfer chain that converts photonic excitation into a charge separation. The D1/D2 (PsbA/PsbD) reaction center heterodimer binds P680, the primary electron donor of PSII as well as several subsequent electron acceptors. D2 is needed for assembly of a stable PSII complex. This chain is Photosystem II D2 protein, found in Synechococcus sp. (strain JA-2-3B'a(2-13)) (Cyanobacteria bacterium Yellowstone B-Prime).